The chain runs to 213 residues: Orotate phosphoribosyltransferase (213 aa).

K26 contributes to the 5-phospho-alpha-D-ribose 1-diphosphate binding site. Orotate is bound at residue 34-35 (FF). 5-phospho-alpha-D-ribose 1-diphosphate is bound by residues 72-73 (YK), R99, K100, K103, H105, and 124-132 (DDVITAGTA). T128 and R156 together coordinate orotate.

Belongs to the purine/pyrimidine phosphoribosyltransferase family. PyrE subfamily. Homodimer. Requires Mg(2+) as cofactor.

It carries out the reaction orotidine 5'-phosphate + diphosphate = orotate + 5-phospho-alpha-D-ribose 1-diphosphate. It participates in pyrimidine metabolism; UMP biosynthesis via de novo pathway; UMP from orotate: step 1/2. Functionally, catalyzes the transfer of a ribosyl phosphate group from 5-phosphoribose 1-diphosphate to orotate, leading to the formation of orotidine monophosphate (OMP). The sequence is that of Orotate phosphoribosyltransferase from Escherichia coli O139:H28 (strain E24377A / ETEC).